The primary structure comprises 126 residues: Large ribosomal subunit protein bL12 (126 aa).

Positions glutamate 107 to leucine 116 are enriched in basic and acidic residues. Positions glutamate 107–lysine 126 are disordered.

The protein belongs to the bacterial ribosomal protein bL12 family. In terms of assembly, homodimer. Part of the ribosomal stalk of the 50S ribosomal subunit. Forms a multimeric L10(L12)X complex, where L10 forms an elongated spine to which 2 to 4 L12 dimers bind in a sequential fashion. Binds GTP-bound translation factors.

Functionally, forms part of the ribosomal stalk which helps the ribosome interact with GTP-bound translation factors. Is thus essential for accurate translation. This Bifidobacterium adolescentis (strain ATCC 15703 / DSM 20083 / NCTC 11814 / E194a) protein is Large ribosomal subunit protein bL12.